We begin with the raw amino-acid sequence, 83 residues long: Cytotoxin A5 (83 aa).

Positions 1–21 are cleaved as a signal peptide; sequence MKTLLLTMVVVTIVCLDLGYT. Disulfide bonds link Cys-24/Cys-43, Cys-36/Cys-61, Cys-65/Cys-76, and Cys-77/Cys-82.

Belongs to the three-finger toxin family. Short-chain subfamily. Orphan group XV sub-subfamily. Expressed by the venom gland.

Its subcellular location is the secreted. The protein resides in the target cell membrane. Functionally, non-cytotoxic protein that does not show lytic and hemolytic activities, but can induce aggregation and fusion of sphingomyelin vesicles. It binds to integrin alpha-V/beta-3 (ITGAV/ITGB3) with high affinity, and it inhibits osteoclast differentiation and bone resorption in mice, probably due to binding to integrin alpha-V/beta-3. The sequence is that of Cytotoxin A5 from Naja atra (Chinese cobra).